The following is an 855-amino-acid chain: Valine--tRNA ligase (855 aa).

A 'HIGH' region motif is present at residues 44-54 (PNVTGVLHIGH). The short motif at 524-528 (KMSKT) is the 'KMSKS' region element. Residue K527 coordinates ATP. The stretch at 797-827 (KVEEDPARKQKEREQLEKNIANSKRQLGDEV) forms a coiled coil.

It belongs to the class-I aminoacyl-tRNA synthetase family. ValS type 1 subfamily. Monomer.

It localises to the cytoplasm. It catalyses the reaction tRNA(Val) + L-valine + ATP = L-valyl-tRNA(Val) + AMP + diphosphate. Functionally, catalyzes the attachment of valine to tRNA(Val). As ValRS can inadvertently accommodate and process structurally similar amino acids such as threonine, to avoid such errors, it has a 'posttransfer' editing activity that hydrolyzes mischarged Thr-tRNA(Val) in a tRNA-dependent manner. This is Valine--tRNA ligase from Solibacter usitatus (strain Ellin6076).